The following is a 171-amino-acid chain: Peptide methionine sulfoxide reductase MsrA (171 aa).

Residue C12 is part of the active site.

The protein belongs to the MsrA Met sulfoxide reductase family.

It catalyses the reaction L-methionyl-[protein] + [thioredoxin]-disulfide + H2O = L-methionyl-(S)-S-oxide-[protein] + [thioredoxin]-dithiol. The enzyme catalyses [thioredoxin]-disulfide + L-methionine + H2O = L-methionine (S)-S-oxide + [thioredoxin]-dithiol. Has an important function as a repair enzyme for proteins that have been inactivated by oxidation. Catalyzes the reversible oxidation-reduction of methionine sulfoxide in proteins to methionine. This chain is Peptide methionine sulfoxide reductase MsrA, found in Leuconostoc mesenteroides subsp. mesenteroides (strain ATCC 8293 / DSM 20343 / BCRC 11652 / CCM 1803 / JCM 6124 / NCDO 523 / NBRC 100496 / NCIMB 8023 / NCTC 12954 / NRRL B-1118 / 37Y).